The following is a 245-amino-acid chain: Ureidoacrylate amidohydrolase RutB (245 aa).

Asp41 (proton acceptor) is an active-site residue. Residue Lys150 is part of the active site. Cys183 functions as the Nucleophile in the catalytic mechanism.

Belongs to the isochorismatase family. RutB subfamily.

It carries out the reaction (Z)-3-ureidoacrylate + H2O + H(+) = (Z)-3-aminoacrylate + NH4(+) + CO2. The catalysed reaction is (Z)-3-ureidoacrylate + H2O = (Z)-3-aminoacrylate + carbamate + H(+). The enzyme catalyses (Z)-2-methylureidoacrylate + H2O + H(+) = (Z)-2-methylaminoacrylate + NH4(+) + CO2. In terms of biological role, hydrolyzes ureidoacrylate to form aminoacrylate and carbamate. The carbamate hydrolyzes spontaneously, thereby releasing one of the nitrogen atoms of the pyrimidine ring as ammonia and one of its carbon atoms as CO2. This chain is Ureidoacrylate amidohydrolase RutB, found in Pseudomonas savastanoi pv. phaseolicola (strain 1448A / Race 6) (Pseudomonas syringae pv. phaseolicola (strain 1448A / Race 6)).